A 129-amino-acid polypeptide reads, in one-letter code: Small ribosomal subunit protein uS11c (129 aa).

The protein belongs to the universal ribosomal protein uS11 family. Part of the 30S ribosomal subunit.

It localises to the plastid. It is found in the chloroplast. The protein is Small ribosomal subunit protein uS11c of Euglena gracilis.